Consider the following 350-residue polypeptide: Pleckstrin (350 aa).

A PH 1 domain is found at Lys-4–Lys-101. Lys-64 is subject to N6-acetyllysine. A phosphoserine mark is found at Ser-113 and Ser-117. In terms of domain architecture, DEP spans Pro-136–Asp-221. Residues Val-244–Arg-347 form the PH 2 domain.

Major protein kinase C substrate of platelets. This chain is Pleckstrin (Plek), found in Mus musculus (Mouse).